The chain runs to 334 residues: Cathepsin R (334 aa).

Positions methionine 1–glycine 17 are cleaved as a signal peptide. Residues valine 18–isoleucine 114 constitute a propeptide, activation peptide. Intrachain disulfides connect cysteine 136/cysteine 179 and cysteine 170/cysteine 212. Residue cysteine 139 is part of the active site. N-linked (GlcNAc...) asparagine glycosylation is present at asparagine 269. Cysteine 270 and cysteine 323 are oxidised to a cystine. Active-site residues include histidine 277 and asparagine 301.

Belongs to the peptidase C1 family. In terms of tissue distribution, placenta.

It is found in the lysosome. This is Cathepsin R (Ctsr) from Mus musculus (Mouse).